Consider the following 660-residue polypeptide: Iron(3+)-hydroxamate import system permease protein FhuB (660 aa).

The next 18 membrane-spanning stretches (helical) occupy residues 5-25 (IALFPALLLALLVIVATALTW), 62-82 (LAISLLVGAGLGLVGVLFQQV), 93-113 (LGVATGAQLGITVTTLWAIPG), 118-138 (QFAAQAGACVVGLIVFGVAWG), 147-167 (ILAGLVVSLYCGAINQLLVIF), 197-217 (QLLGGVMLTLLLLRPLTLMGL), 240-260 (AIVISALLVNAVGIIGFIGLF), 277-297 (LMLASLIGALILWLSDQIILW), 303-323 (MEVSTGSVTALIGAPLLLWLL), 348-368 (LAFALAGGVLLLMAVVVALSF), 391-411 (WPRIMAALFAGVMLAVAGCII), 424-444 (VLGISSGAAFGVVLMLFLVPG), 447-467 (FGWLLPAGSLGAAVTLLIIMI), 479-499 (MLLAGMALSTAFTMLLMMLQA), 528-548 (GIVMVILLAITPLCRRWLTIL), 567-587 (IALLLLAACLTATATMTIGPL), 607-627 (MPHIVISALVGGLLLVFADWC), and 635-655 (FQIPAGLLSTFIGAPYFIYLL).

It belongs to the binding-protein-dependent transport system permease family. FecCD subfamily. The complex is composed of two ATP-binding proteins (FhuC), a transmembrane protein (FhuB) and a solute-binding protein (FhuD). FhuB interacts with FhuC. FhuB interacts with FhuD. FhuB binds substrate-loaded FhuD more strongly than FhuD alone.

Its subcellular location is the cell inner membrane. Part of the ABC transporter complex FhuCDB involved in iron(3+)-hydroxamate import. Responsible for the translocation of the substrate across the membrane. This chain is Iron(3+)-hydroxamate import system permease protein FhuB (fhuB), found in Escherichia coli (strain K12).